We begin with the raw amino-acid sequence, 440 residues long: 23S rRNA (uracil(1939)-C(5))-methyltransferase RlmD (440 aa).

The TRAM domain maps to 6 to 64 (PIHNAQPEQVFIESLDTEGRGIARVEGKVLFVDGALPGERVWARRTQNHKSFDRAELLQ). [4Fe-4S] cluster-binding residues include Cys77, Cys83, Cys86, and Cys164. S-adenosyl-L-methionine-binding residues include Gln273, Phe302, Asn307, Glu323, Asp351, and Asp372. Catalysis depends on Cys397, which acts as the Nucleophile.

Belongs to the class I-like SAM-binding methyltransferase superfamily. RNA M5U methyltransferase family. RlmD subfamily.

It catalyses the reaction uridine(1939) in 23S rRNA + S-adenosyl-L-methionine = 5-methyluridine(1939) in 23S rRNA + S-adenosyl-L-homocysteine + H(+). In terms of biological role, catalyzes the formation of 5-methyl-uridine at position 1939 (m5U1939) in 23S rRNA. This is 23S rRNA (uracil(1939)-C(5))-methyltransferase RlmD from Acidithiobacillus ferrooxidans (strain ATCC 23270 / DSM 14882 / CIP 104768 / NCIMB 8455) (Ferrobacillus ferrooxidans (strain ATCC 23270)).